A 555-amino-acid chain; its full sequence is Coiled-coil domain-containing protein 102A (555 aa).

Disordered regions lie at residues 1–68 (MSHG…ADGD), 136–202 (LAGA…GSQE), and 214–254 (PEEP…EEDA). Ser-12, Ser-26, and Ser-28 each carry phosphoserine. Pro residues predominate over residues 37-61 (SLPPTPPSGTPSPGPPPALPLPPTP). Residues 72-161 (REELRLRELE…ARGRELARLR (90 aa)) adopt a coiled-coil conformation. Basic and acidic residues-rich tracts occupy residues 136-159 (LAGARRERQEAQGESEARGRELAR) and 166-183 (GVDRTPDGPETEPEREQE). Residues 224-236 (RSAGAGAPRGSSG) show a composition bias toward low complexity. Coiled-coil stretches lie at residues 268–401 (QKVL…RRQT) and 432–522 (KLKK…QNAP). The interval 478-555 (ELDEAHNQAR…EDEDLQIQVA (78 aa)) is disordered. Acidic residues predominate over residues 536–555 (EAGDGASDLDEDEDLQIQVA). At Ser-542 the chain carries Phosphoserine.

The polypeptide is Coiled-coil domain-containing protein 102A (CCDC102A) (Bos taurus (Bovine)).